The sequence spans 295 residues: UTP--glucose-1-phosphate uridylyltransferase (295 aa).

This sequence belongs to the UDPGP type 2 family.

It catalyses the reaction alpha-D-glucose 1-phosphate + UTP + H(+) = UDP-alpha-D-glucose + diphosphate. In terms of biological role, may play a role in stationary phase survival. The polypeptide is UTP--glucose-1-phosphate uridylyltransferase (galU) (Haemophilus ducreyi (strain 35000HP / ATCC 700724)).